Reading from the N-terminus, the 276-residue chain is D-apionate oxidoisomerase (276 aa).

NAD(+) is bound by residues 12 to 14 (GKM), E33, and D69. Residues H114 and E184 each coordinate Zn(2+).

It belongs to the ApnO family. It depends on Zn(2+) as a cofactor.

It catalyses the reaction D-apionate + NAD(+) = 3-oxoisoapionate + NADH + H(+). The protein operates within carbohydrate metabolism. In terms of biological role, involved in catabolism of D-apiose. Catalyzes the conversion of D-apionate to 3-oxo-isoapionate. The chain is D-apionate oxidoisomerase from Cupriavidus necator (strain ATCC 43291 / DSM 13513 / CCUG 52238 / LMG 8453 / N-1) (Ralstonia eutropha).